A 454-amino-acid polypeptide reads, in one-letter code: uncharacterized protein (454 aa).

Positions 364–405 (CSRPGCDAPAYHSEVHHVTPWTTTHRTDINDLTLACGPDNRL) constitute an HNH domain. Residues 415 to 434 (NAKGDTEWLPPAHLDHGQPR) form a disordered region.

It belongs to the Rv1128c/1148c/1588c/1702c/1945/3466 family.

This is an uncharacterized protein from Mycobacterium tuberculosis (strain CDC 1551 / Oshkosh).